A 231-amino-acid chain; its full sequence is Uracil-DNA glycosylase (231 aa).

Residue Asp-70 is the Proton acceptor of the active site.

It belongs to the uracil-DNA glycosylase (UDG) superfamily. UNG family.

Its subcellular location is the cytoplasm. The enzyme catalyses Hydrolyzes single-stranded DNA or mismatched double-stranded DNA and polynucleotides, releasing free uracil.. Its function is as follows. Excises uracil residues from the DNA which can arise as a result of misincorporation of dUMP residues by DNA polymerase or due to deamination of cytosine. This Pseudomonas fluorescens (strain Pf0-1) protein is Uracil-DNA glycosylase.